Reading from the N-terminus, the 146-residue chain is 3-hydroxyacyl-[acyl-carrier-protein] dehydratase FabZ (146 aa).

H46 is an active-site residue.

Belongs to the thioester dehydratase family. FabZ subfamily.

The protein localises to the cytoplasm. It catalyses the reaction a (3R)-hydroxyacyl-[ACP] = a (2E)-enoyl-[ACP] + H2O. In terms of biological role, involved in unsaturated fatty acids biosynthesis. Catalyzes the dehydration of short chain beta-hydroxyacyl-ACPs and long chain saturated and unsaturated beta-hydroxyacyl-ACPs. In Acinetobacter baumannii (strain ATCC 17978 / DSM 105126 / CIP 53.77 / LMG 1025 / NCDC KC755 / 5377), this protein is 3-hydroxyacyl-[acyl-carrier-protein] dehydratase FabZ.